A 262-amino-acid chain; its full sequence is Indole-3-glycerol phosphate synthase (262 aa).

This sequence belongs to the TrpC family.

It catalyses the reaction 1-(2-carboxyphenylamino)-1-deoxy-D-ribulose 5-phosphate + H(+) = (1S,2R)-1-C-(indol-3-yl)glycerol 3-phosphate + CO2 + H2O. It functions in the pathway amino-acid biosynthesis; L-tryptophan biosynthesis; L-tryptophan from chorismate: step 4/5. This chain is Indole-3-glycerol phosphate synthase, found in Bordetella avium (strain 197N).